Here is a 221-residue protein sequence, read N- to C-terminus: Glutathione S-transferase (221 aa).

Met1 carries the post-translational modification N-acetylmethionine. Ala2 carries the N-acetylalanine; in Glutathione S-transferase, N-terminally processed modification. In terms of domain architecture, GST N-terminal spans 3-82; it reads GEQNIKYFNI…YIAEKYNLLG (80 aa). Residues Tyr9, Lys45, 53 to 54, and 66 to 67 contribute to the glutathione site; these read QV and QT. Positions 84–208 constitute a GST C-terminal domain; sequence DMKEHAQIIM…PGSKRKPVPD (125 aa).

Belongs to the GST superfamily. Alpha family. In terms of assembly, homodimer or heterodimer of GSTA1 and GSTA2.

It localises to the cytoplasm. The catalysed reaction is RX + glutathione = an S-substituted glutathione + a halide anion + H(+). The enzyme catalyses prostaglandin A2 + glutathione = prostaglandin A2-S-(R)-glutathione. It carries out the reaction prostaglandin J2 + glutathione = prostaglandin J2-S-(R)-glutathione. It catalyses the reaction (13S)-hydroperoxy-(9Z,11E)-octadecadienoate + 2 glutathione = (13S)-hydroxy-(9Z,11E)-octadecadienoate + glutathione disulfide + H2O. The catalysed reaction is androst-5-ene-3,17-dione = androst-4-ene-3,17-dione. Its function is as follows. Glutathione S-transferase that catalyzes the nucleophilic attack of the sulfur atom of glutathione on the electrophilic groups of a wide range of exogenous and endogenous compounds. Involved in the formation of glutathione conjugates of both prostaglandin A2 (PGA2) and prostaglandin J2 (PGJ2). It also catalyzes the isomerization of D5-androstene-3,17-dione (AD) into D4-androstene-3,17-dione and may therefore play an important role in hormone biosynthesis. Through its glutathione-dependent peroxidase activity toward the fatty acid hydroperoxide (13S)-hydroperoxy-(9Z,11E)-octadecadienoate/13-HPODE it is also involved in the metabolism of oxidized linoleic acid. The sequence is that of Glutathione S-transferase from Antechinus stuartii (Brown marsupial mouse).